The primary structure comprises 349 residues: Peroxidase C3 (349 aa).

An N-terminal signal peptide occupies residues 1–29 (MGFSPLISCSAMGALILSCLLLQASNSNA). Intrachain disulfides connect Cys-40–Cys-120, Cys-73–Cys-78, Cys-126–Cys-329, and Cys-206–Cys-238. His-71 (proton acceptor) is an active-site residue. Ca(2+)-binding residues include Asp-72, Val-75, Gly-77, Asp-79, and Ser-81. An N-linked (GlcNAc...) asparagine glycan is attached at Asn-86. Pro-168 is a binding site for substrate. His-199 is a heme b binding site. Thr-200 lines the Ca(2+) pocket. Asn-217 and Asn-243 each carry an N-linked (GlcNAc...) asparagine glycan. Residues Asp-251, Thr-254, and Asp-259 each coordinate Ca(2+).

Belongs to the peroxidase family. Classical plant (class III) peroxidase subfamily. Requires Ca(2+) as cofactor. Heme b serves as cofactor.

The protein localises to the secreted. It localises to the vacuole. The enzyme catalyses 2 a phenolic donor + H2O2 = 2 a phenolic radical donor + 2 H2O. Functionally, removal of H(2)O(2), oxidation of toxic reductants, biosynthesis and degradation of lignin, suberization, auxin catabolism, response to environmental stresses such as wounding, pathogen attack and oxidative stress. These functions might be dependent on each isozyme/isoform in each plant tissue. The protein is Peroxidase C3 (PRXC3) of Armoracia rusticana (Horseradish).